A 289-amino-acid chain; its full sequence is 4-hydroxy-tetrahydrodipicolinate synthase (289 aa).

A pyruvate-binding site is contributed by threonine 43. The active-site Proton donor/acceptor is the tyrosine 131. The active-site Schiff-base intermediate with substrate is lysine 160. Valine 200 provides a ligand contact to pyruvate.

The protein belongs to the DapA family. Homotetramer; dimer of dimers.

The protein resides in the cytoplasm. The enzyme catalyses L-aspartate 4-semialdehyde + pyruvate = (2S,4S)-4-hydroxy-2,3,4,5-tetrahydrodipicolinate + H2O + H(+). It participates in amino-acid biosynthesis; L-lysine biosynthesis via DAP pathway; (S)-tetrahydrodipicolinate from L-aspartate: step 3/4. Its function is as follows. Catalyzes the condensation of (S)-aspartate-beta-semialdehyde [(S)-ASA] and pyruvate to 4-hydroxy-tetrahydrodipicolinate (HTPA). This is 4-hydroxy-tetrahydrodipicolinate synthase from Methanococcus maripaludis (strain DSM 14266 / JCM 13030 / NBRC 101832 / S2 / LL).